The following is an 829-amino-acid chain: Protein Jade-1 (829 aa).

Positions 1 to 10 (MKRSRVPSTS) are enriched in polar residues. Residues 1–40 (MKRSRVPSTSEDSDNGSNSTSWSQHSNSKHRKQSGKRPSE) form a disordered region. A compositionally biased stretch (low complexity) spans 15–26 (NGSNSTSWSQHS). A PHD-type 1 zinc finger spans residues 196 to 246 (DVVCDVCQSPDGEDGNEMVFCDKCNICVHQACYGILKVPEGSWLCRTCALG). The C2HC pre-PHD-type zinc finger occupies 248-282 (FPKCHLCPKKGGAMKPTRSGTKWVHVSCALWIPEV). Residues 306–362 (LICCLCKEKTGACIQCSAKSCRVAFHVTCGLHCGLKMNTILTEADEVKFKSFCPKHS) form a PHD-type 2 zinc finger. Disordered regions lie at residues 368–408 (EEEG…PEET), 556–651 (PPVP…RRKS), and 697–829 (ATAP…VLAS). The span at 374–390 (DRPVKVPTREDRSRNRG) shows a compositional bias: basic and acidic residues. Composition is skewed to polar residues over residues 394–405 (SASSQTRLSQNP), 570–586 (GQNSTLSSSEKGSNSYR), and 607–619 (SGDSVRSETVMSA). Residues 622-648 (RRSEGRTRSGESHRKEEESERPLEDRR) are compositionally biased toward basic and acidic residues. The segment covering 697–714 (ATAPNMYSGSPRKTNASH) has biased composition (polar residues). Basic and acidic residues predominate over residues 738–754 (KRSERTSAGRQTERQEA). A compositionally biased stretch (low complexity) spans 762 to 774 (SSLKTFSTSPSSP). The segment covering 782–792 (TGSENRRHLEE) has biased composition (basic and acidic residues).

The protein belongs to the JADE family. As to quaternary structure, component of the HBO1 complex composed.

It is found in the nucleus. The protein localises to the chromosome. The protein resides in the cytoplasm. It localises to the cytoskeleton. Its subcellular location is the cilium basal body. In terms of biological role, scaffold subunit of some HBO1 complexes, which have a histone H4 acetyltransferase activity. Plays a key role in HBO1 complex by directing KAT7/HBO1 specificity towards histone H4 acetylation (H4K5ac, H4K8ac and H4K12ac), regulating DNA replication initiation, regulating DNA replication initiation. The polypeptide is Protein Jade-1 (jade1) (Danio rerio (Zebrafish)).